The following is a 590-amino-acid chain: TPR repeat-containing protein PA4667 (590 aa).

5 TPR repeats span residues 235–268, 269–302, 370–403, 405–438, and 508–541; these read VAPLLLRSRLLQSMKRSDEALPLLKAGIKEHPDD, KRVRLAYARLLVEQNRLDDAKAEFAGLVQQFPDD, LPAQLRQTDVLLKAGRVDEAAQRLDKARSEQPDY, IQLYLIEAEALSNNDQQEKAWQAIQEGLKQYPED, and PAILDSMGWINYRQGKLADAERYLRQALQRYPDH.

This Pseudomonas aeruginosa (strain ATCC 15692 / DSM 22644 / CIP 104116 / JCM 14847 / LMG 12228 / 1C / PRS 101 / PAO1) protein is TPR repeat-containing protein PA4667.